We begin with the raw amino-acid sequence, 246 residues long: tRNA (guanine-N(7)-)-methyltransferase (246 aa).

Residues E77, E102, D129, and D152 each contribute to the S-adenosyl-L-methionine site. Residue D152 is part of the active site. Residues K156, D188, and 225–228 contribute to the substrate site; that span reads TKFE.

This sequence belongs to the class I-like SAM-binding methyltransferase superfamily. TrmB family.

The enzyme catalyses guanosine(46) in tRNA + S-adenosyl-L-methionine = N(7)-methylguanosine(46) in tRNA + S-adenosyl-L-homocysteine. It participates in tRNA modification; N(7)-methylguanine-tRNA biosynthesis. In terms of biological role, catalyzes the formation of N(7)-methylguanine at position 46 (m7G46) in tRNA. This chain is tRNA (guanine-N(7)-)-methyltransferase, found in Haemophilus influenzae (strain ATCC 51907 / DSM 11121 / KW20 / Rd).